The primary structure comprises 241 residues: MDYFSIIKITMITEIYFQYVIYILCFGVLLLLKSESDRLLWLHLVSILVGLIANYEMKFNVLFAMFHSAVHNLWPFLKNTGYDNTEKSVYDVICHTIMVVICYHQICYTENAVTNNYYTFHLFSVMIIIGALFNCVVSGKAIGSNDRFLHSLFEYTTIFQALSTGYWVATMLWYHHLDNIHFYSHWIIWIGLMTINWFVYKFYPNLVGISMRYKYVEAVFIVCTWYSGIISSPLIKYINVY.

7 helical membrane-spanning segments follow: residues 12–32 (ITEIYFQYVIYILCFGVLLLL), 39–59 (LLWLHLVSILVGLIANYEMKF), 89–109 (VYDVICHTIMVVICYHQICYT), 117–137 (YYTFHLFSVMIIIGALFNCVV), 152–172 (LFEYTTIFQALSTGYWVATML), 180–200 (IHFYSHWIIWIGLMTINWFVY), and 215–235 (YVEAVFIVCTWYSGIISSPLI).

This sequence belongs to the mimivirus L68/R809 family.

The protein resides in the membrane. This is an uncharacterized protein from Acanthamoeba polyphaga mimivirus (APMV).